A 395-amino-acid polypeptide reads, in one-letter code: Elongation factor Tu (395 aa).

The tr-type G domain occupies K10–E204. Residues G19 to T26 are G1. G19–T26 is a GTP binding site. Mg(2+) is bound at residue T26. The tract at residues G60–S64 is G2. Positions D81–G84 are G3. Residues D81–H85 and N136–D139 contribute to the GTP site. The interval N136–D139 is G4. The interval S174–L176 is G5.

It belongs to the TRAFAC class translation factor GTPase superfamily. Classic translation factor GTPase family. EF-Tu/EF-1A subfamily. As to quaternary structure, monomer.

It is found in the cytoplasm. The enzyme catalyses GTP + H2O = GDP + phosphate + H(+). Functionally, GTP hydrolase that promotes the GTP-dependent binding of aminoacyl-tRNA to the A-site of ribosomes during protein biosynthesis. The protein is Elongation factor Tu of Oceanobacillus iheyensis (strain DSM 14371 / CIP 107618 / JCM 11309 / KCTC 3954 / HTE831).